The following is a 1139-amino-acid chain: Solute carrier family 12 member 5 (1139 aa).

Disordered stretches follow at residues 1–62 (MSRR…KGRE) and 95–116 (PQGSKEHEEAENNEGGKKKPVQ). The Cytoplasmic segment spans residues 1-98 (MSRRFTVTSL…ANYTNLPQGS (98 aa)). Residues 21–45 (PESRRHSVADPRRLPREDVKGDGNP) are compositionally biased toward basic and acidic residues. Residues 46-55 (KESSPFINST) are compositionally biased toward polar residues. Threonine 57 is subject to Phosphothreonine. Positions 98–111 (SKEHEEAENNEGGK) are enriched in basic and acidic residues. Residues 99–120 (KEHEEAENNEGGKKKPVQAPRM) form a discontinuously helical membrane-spanning segment. Lysine 113 is a K(+) binding site. Residues 121–129 (GTFMGVYLP) lie on the Extracellular side of the membrane. A helical membrane pass occupies residues 130 to 151 (CLQNIFGVILFLRLTWVVGIAG). Residues 152 to 174 (IMESFCMVFICCSCTMLTAISMS) are Cytoplasmic-facing. A helical transmembrane segment spans residues 175–203 (AIATNGVVPAGGSYYMISRSLGPEFGGAV). Residue alanine 184 coordinates chloride. Topologically, residues 204-229 (GLCFYLGTTFAGAMYILGTIEILLAY) are extracellular. The next 2 helical transmembrane spans lie at 230-250 (LFPAMAIFKAEDASGEAAAML) and 251-276 (NNMRVYGTCVLTCMATVVFVGVKYVN). At 277 to 402 (KFALVFLGCV…ERRGMPSVGL (126 aa)) the chain is on the extracellular side. An intrachain disulfide couples cysteine 310 to cysteine 325. N-linked (GlcNAc...) asparagine glycans are attached at residues asparagine 314, asparagine 333, asparagine 351, and asparagine 362. Residues cysteine 345 and cysteine 354 are joined by a disulfide bond. The chain crosses the membrane as a helical span at residues 403 to 420 (ADGTPVDMDHPYVFSDMT). A K(+)-binding site is contributed by methionine 410. Tyrosine 414 and valine 415 together coordinate chloride. The Cytoplasmic segment spans residues 421 to 429 (SYFTLLVGI). Residues 430 to 453 (YFPSVTGIMAGSNRSGDLRDAQKS) traverse the membrane as a helical segment. Position 446 (aspartate 446) interacts with K(+). At 454-485 (IPTGTILAIATTSAVYISSVVLFGACIEGVVL) the chain is on the extracellular side. Residues 486-513 (RDKFGEAVNGNLVVGTLAWPSPWVIVIG) form a helical membrane-spanning segment. Topologically, residues 514-534 (SFFSTCGAGLQSLTGAPRLLQ) are cytoplasmic. 2 consecutive transmembrane segments (helical) span residues 535 to 555 (AISRDGIVPFLQVFGHGKANG) and 556 to 578 (EPTWALLLTACICEIGILIASLD). Residue glutamate 569 participates in chloride binding. Topologically, residues 579 to 592 (EVAPILSMFFLMCY) are cytoplasmic. The next 2 helical transmembrane spans lie at 593-615 (MFVNLACAVQTLLRTPNWRPRFR) and 616-632 (YYHWTLSFLGMSLCLAL). Residues 633–1139 (MFICSWYYAL…GGREVITIYS (507 aa)) are Cytoplasmic-facing. Residues 667 to 681 (GIRGLSLSAARYALL) form a scissor helix region. Threonine 929 is modified (phosphothreonine; by OXSR1 and STK39). Residues 943 to 1025 (HLTKNERERE…PEGEGETDPE (83 aa)) form a disordered region. Residues 945–962 (TKNEREREIQSITDESRG) are compositionally biased toward basic and acidic residues. Positions 982 to 994 (TACDNEEKPEEEV) are enriched in acidic residues. Residues 1003-1012 (PSCPSSSPSP) are compositionally biased toward low complexity. Threonine 1030 is subject to Phosphothreonine; by OXSR1 and STK39. The segment at 1033-1052 (KDKSAAQKNKGPSPVSSEGI) is disordered. A phosphoserine mark is found at serine 1045, serine 1048, and serine 1049.

Belongs to the SLC12A transporter family. K/Cl co-transporter subfamily. In terms of assembly, homodimer; adopts a domain-swap conformation at the scissor helices connecting the transmembrane domain and C-terminal domain. Heterodimer wHeterodimer with K-Cl cotransporters SLC12A6 and SLC12A7. Interacts with AP2A1. Post-translationally, phosphorylated at Thr-929 and Thr-1030 by OXSR1/OSR1 and STK39/SPAK downstream of WNK kinases (WNK1, WNK2, WNK3 or WNK4), inhibiting the potassium-chloride cotransport activity. As to expression, highly expressed in brain. Not detected in other tissues. Highly expressed in pyramidal neurons and in neurons throughout the cortex, hippocampus, the granular layer of the cerebellum and in groups of neurons throughout the brainstem. Barely detectable in dorsal-root ganglions.

The protein resides in the cell membrane. It localises to the cell projection. Its subcellular location is the dendrite. The catalysed reaction is K(+)(in) + chloride(in) = K(+)(out) + chloride(out). Inhibited following phosphorylation by OXSR1/OSR1 and STK39/SPAK: phosphorylation takes place downstream of WNK kinases (WNK1, WNK2, WNK3 or WNK4) in response to hyperosmotic stress and subsequent cell shrinkage. Mediates electroneutral potassium-chloride cotransport in mature neurons and is required for neuronal Cl(-) homeostasis. As major extruder of intracellular chloride, it establishes the low neuronal Cl(-) levels required for chloride influx after binding of GABA-A and glycine to their receptors, with subsequent hyperpolarization and neuronal inhibition. Involved in the regulation of dendritic spine formation and maturation. The polypeptide is Solute carrier family 12 member 5 (Slc12a5) (Rattus norvegicus (Rat)).